Reading from the N-terminus, the 294-residue chain is MFSESDLKRLVEEVLVEMTTKEGANIKDTPVSQPTPTVVDEDGIIPDITEVDIRTNLLVDNPENAEEYLKMKKHTPARIGVGKAGTRYKTETILRFRADHAAAQDAVFTDVDEKILEEMNLETIQTMCSSKDEFITRPDLGRKISKEELSKLSSYKKNAQVQIYVSDGLSSKAVEANVKNILPALIQGLEGYGISVGKPFFVKLGRVGAMDVISEEFGADVTCVLIGERPGLVTAESMSAYIAYKGTVGMPESRRTVVSNIHKGGTPAVEAGAYIADIIKLMLEKKASGLDLKL.

V207 and E228 together coordinate adenosylcob(III)alamin.

The protein belongs to the EutC family. In terms of assembly, the basic unit is a heterodimer which dimerizes to form tetramers. The heterotetramers trimerize; 6 large subunits form a core ring with 6 small subunits projecting outwards. Adenosylcob(III)alamin is required as a cofactor.

The protein resides in the bacterial microcompartment. It catalyses the reaction ethanolamine = acetaldehyde + NH4(+). Its pathway is amine and polyamine degradation; ethanolamine degradation. In terms of biological role, catalyzes the deamination of various vicinal amino-alcohols to oxo compounds. Allows this organism to utilize ethanolamine as the sole source of nitrogen and carbon in the presence of external vitamin B12. This chain is Ethanolamine ammonia-lyase small subunit, found in Clostridium tetani (strain Massachusetts / E88).